The following is a 603-amino-acid chain: MRQSYRYASGAVVRRTLKGLRKLILCQDLRQDIRHLVRSYADMNISLPISAPPGWRLDFVEFEDIFGSAAVTDGPETPWGQLICCEESLESLGVLQFSTTVLPRVHGPRSSSEDEDSDDDDFFVYVEEIEPPSQARLVLLLGRYETVWCLDRDRGVLYYLAHSLDDFARHGLLHCEAIYGEQMRTPLLTTQPDHIICDLRLHDNSISELQRVTCRYRGECVPLRTPGEMTRPLLLCGQAENLKGVWPFICMETEQFNDLLKFFVDRLCCETMIMGVVGESLPSGVFHADFVILVDRACEFFYFDVSRREIWRLADSVDMLLTVGLLKIYQAGRRFHYAVDDAERLEVPGRCPHENFPFWDRFGTVERVRASTRHHELRYKWLIRKDRFIVRPDWCSMRNSLDEVSGTADVSWDPRIRPDYPQTSDLECAKQYWQELNDHVREQTARYGPVRRYSVWCGMSSRLERAVKRLQQRIPRQNLMNPSLMNQGLCVYYSDEEEDQEEDDTSDDDDQEKETENPQNNIGSLTRTPSSPGSLEGVEERMLNVMKEAVAEQDRKKTQKKHKIDTAQRRVLTRRAARAAVLEGRPTPKPTMPHPVSYLPFWM.

Residues 496–513 show a composition bias toward acidic residues; it reads EEEDQEEDDTSDDDDQEK. 2 disordered regions span residues 496-536 and 549-568; these read EEED…GSLE and AVAE…DTAQ. Residues 517-533 show a composition bias toward polar residues; it reads NPQNNIGSLTRTPSSPG.

Belongs to the herpesviridae US22 family.

This is an uncharacterized protein from Human cytomegalovirus (strain AD169) (HHV-5).